The primary structure comprises 312 residues: MRFKGLDLNLLVALDALMTKRSVTAAARSINLSQPAMSAAIARLRTYFGDDLFTMRGRELIPTPRAIALAPAVRDALLHIQFSIISWDMFNPVQSERRFRIRLSDVMMLVFFERVVKRLAREAPGIGFELLPLTEDPDELLRYGDVDFVILPELFASSDHPKAKLLDDTLVCVGCPTNKQLKRQLSFENYGSMGHIAAKFGRTLKPSIENWLLLEHGLKRRIEVVVPGFSLIPPLLSGTDRIATMPLRLVEHFAKTTPLRVAELPLALPPFAQAVQWPSLHNRDQASIWMRQVLLQEALHMTAPRDSVEYRP.

The region spanning 6–63 is the HTH lysR-type domain; it reads LDLNLLVALDALMTKRSVTAAARSINLSQPAMSAAIARLRTYFGDDLFTMRGRELIPT. The segment at residues 23–42 is a DNA-binding region (H-T-H motif); the sequence is VTAAARSINLSQPAMSAAIA.

It belongs to the LysR transcriptional regulatory family.

In terms of biological role, represses the expression of the nodABCIJ-nolO-noeI operon. The polypeptide is Nodulation protein D 2 (nodD2) (Sinorhizobium fredii (strain NBRC 101917 / NGR234)).